We begin with the raw amino-acid sequence, 69 residues long: Large ribosomal subunit protein bL32c (69 aa).

Belongs to the bacterial ribosomal protein bL32 family.

The protein localises to the plastid. It localises to the chloroplast. This Pelargonium hortorum (Common geranium) protein is Large ribosomal subunit protein bL32c.